Here is a 217-residue protein sequence, read N- to C-terminus: MQIFLDSTDTKVIADLASTGLIDGVTTNPTLIAKSGRPMLEVIAEICDIVPGPISAEVAATTADAMIAEGQKLAKIAPNVVVKIPLTRDGLIACAAFADEEIKTNVTLCFSPTQALLAAKAGATYISPFIGRLDDYGFDGMDLIRDIRAIYDNYGYETEILAASVRNAAHVKEAAIVGADVVTIPPAVFSDLYKHPLTDKGLEQFLKDWASTGQSIL.

The active-site Schiff-base intermediate with substrate is lysine 83.

This sequence belongs to the transaldolase family. Type 3B subfamily.

The protein resides in the cytoplasm. The catalysed reaction is D-sedoheptulose 7-phosphate + D-glyceraldehyde 3-phosphate = D-erythrose 4-phosphate + beta-D-fructose 6-phosphate. The protein operates within carbohydrate degradation; pentose phosphate pathway; D-glyceraldehyde 3-phosphate and beta-D-fructose 6-phosphate from D-ribose 5-phosphate and D-xylulose 5-phosphate (non-oxidative stage): step 2/3. Transaldolase is important for the balance of metabolites in the pentose-phosphate pathway. This chain is Probable transaldolase, found in Caulobacter vibrioides (strain NA1000 / CB15N) (Caulobacter crescentus).